Consider the following 148-residue polypeptide: [Ribosomal protein bS18]-alanine N-acetyltransferase (148 aa).

One can recognise an N-acetyltransferase domain in the interval 2–147 (NTISSLETTD…DAIIMALPIS (146 aa)). 69–71 (IAV) provides a ligand contact to acetyl-CoA. The Proton acceptor role is filled by Glu-103. Position 108 (Asn-108) interacts with acetyl-CoA. Tyr-115 functions as the Proton donor in the catalytic mechanism.

The protein belongs to the acetyltransferase family. RimI subfamily.

It localises to the cytoplasm. The catalysed reaction is N-terminal L-alanyl-[ribosomal protein bS18] + acetyl-CoA = N-terminal N(alpha)-acetyl-L-alanyl-[ribosomal protein bS18] + CoA + H(+). In terms of biological role, acetylates the N-terminal alanine of ribosomal protein bS18. This is [Ribosomal protein bS18]-alanine N-acetyltransferase from Escherichia coli O157:H7.